A 932-amino-acid chain; its full sequence is DNA mismatch repair protein MutS (932 aa).

Over residues 1 to 13 the composition is skewed to acidic residues; sequence MTTDTDTDVDAGT. A disordered region spans residues 1–26; the sequence is MTTDTDTDVDAGTDLEPQPEGPPEKM. 648 to 655 contacts ATP; it reads GPNMSGKS. The tract at residues 865–892 is disordered; it reads NQQNQASDDDEIARSPRGADTNTDAGIN.

The protein belongs to the DNA mismatch repair MutS family.

This protein is involved in the repair of mismatches in DNA. It is possible that it carries out the mismatch recognition step. This protein has a weak ATPase activity. This Haloquadratum walsbyi (strain DSM 16790 / HBSQ001) protein is DNA mismatch repair protein MutS.